Here is an 855-residue protein sequence, read N- to C-terminus: Photoactivated adenylate cyclase subunit beta-like protein 1224-5/9F (855 aa).

Residues 56 to 149 form the BLUF 1 domain; the sequence is LRRLMYLSKG…GRMSGVWHMK (94 aa). The disordered stretch occupies residues 420–444; the sequence is RPPIFDDTPKCNPRPRTPGCEGRQR. In terms of domain architecture, BLUF 2 spans 471-563; that stretch reads VPTLTYISHA…RVYPSEWTLT (93 aa). A compositionally biased stretch (basic and acidic residues) spans 813–827; the sequence is RSGEKPLTEPEEAKL. Positions 813-855 are disordered; that stretch reads RSGEKPLTEPEEAKLDFSPGRVRHGDSGRRSNSAQGKLSIQVR. Polar residues predominate over residues 842–855; sequence RSNSAQGKLSIQVR.

In terms of assembly, heterotetramer of two alpha and two beta subunits.

It localises to the cell projection. It is found in the cilium. The protein resides in the flagellum. The sequence is that of Photoactivated adenylate cyclase subunit beta-like protein 1224-5/9F from Euglena gracilis.